The chain runs to 617 residues: Chaperone protein HscA homolog (617 aa).

The protein belongs to the heat shock protein 70 family.

Chaperone involved in the maturation of iron-sulfur cluster-containing proteins. Has a low intrinsic ATPase activity which is markedly stimulated by HscB. This is Chaperone protein HscA homolog from Actinobacillus pleuropneumoniae serotype 5b (strain L20).